The chain runs to 341 residues: L-threonine 3-dehydrogenase (341 aa).

C38 contributes to the Zn(2+) binding site. Residues T40 and H43 each act as charge relay system in the active site. Residues H63, E64, C93, C96, C99, and C107 each coordinate Zn(2+). Residues I175, D195, R200, 262 to 264 (LGI), and 286 to 287 (IY) contribute to the NAD(+) site.

It belongs to the zinc-containing alcohol dehydrogenase family. Homotetramer. It depends on Zn(2+) as a cofactor.

Its subcellular location is the cytoplasm. The enzyme catalyses L-threonine + NAD(+) = (2S)-2-amino-3-oxobutanoate + NADH + H(+). Its pathway is amino-acid degradation; L-threonine degradation via oxydo-reductase pathway; glycine from L-threonine: step 1/2. Catalyzes the NAD(+)-dependent oxidation of L-threonine to 2-amino-3-ketobutyrate. The polypeptide is L-threonine 3-dehydrogenase (Shewanella putrefaciens (strain CN-32 / ATCC BAA-453)).